Here is a 512-residue protein sequence, read N- to C-terminus: Maturase K (512 aa).

It belongs to the intron maturase 2 family. MatK subfamily.

Its subcellular location is the plastid. It is found in the chloroplast. Its function is as follows. Usually encoded in the trnK tRNA gene intron. Probably assists in splicing its own and other chloroplast group II introns. This chain is Maturase K, found in Lilium regale (Regal lily).